The sequence spans 380 residues: Chaperone protein DnaJ (380 aa).

Positions 5–70 (DYYEALGVAR…RKRTAYDQFG (66 aa)) constitute a J domain. The CR-type zinc-finger motif lies at 137–215 (GTTAKIRIPT…CRGEGRVREH (79 aa)). Residues Cys150, Cys153, Cys167, Cys170, Cys189, Cys192, Cys203, and Cys206 each coordinate Zn(2+). 4 CXXCXGXG motif repeats span residues 150-157 (CKACEGSG), 167-174 (CPTCGGHG), 189-196 (CPRCHGSG), and 203-210 (CSTCRGEG). A disordered region spans residues 222–247 (IPPGVDTGDRIRLTGEGEAGESGGPP).

It belongs to the DnaJ family. As to quaternary structure, homodimer. It depends on Zn(2+) as a cofactor.

It is found in the cytoplasm. Participates actively in the response to hyperosmotic and heat shock by preventing the aggregation of stress-denatured proteins and by disaggregating proteins, also in an autonomous, DnaK-independent fashion. Unfolded proteins bind initially to DnaJ; upon interaction with the DnaJ-bound protein, DnaK hydrolyzes its bound ATP, resulting in the formation of a stable complex. GrpE releases ADP from DnaK; ATP binding to DnaK triggers the release of the substrate protein, thus completing the reaction cycle. Several rounds of ATP-dependent interactions between DnaJ, DnaK and GrpE are required for fully efficient folding. Also involved, together with DnaK and GrpE, in the DNA replication of plasmids through activation of initiation proteins. The chain is Chaperone protein DnaJ from Nitrosococcus oceani (strain ATCC 19707 / BCRC 17464 / JCM 30415 / NCIMB 11848 / C-107).